Reading from the N-terminus, the 530-residue chain is Cilia- and flagella-associated protein 97 (530 aa).

Ser-19 bears the Phosphoserine mark. Disordered regions lie at residues 29-83 and 116-258; these read TNSV…PVEN and IPNR…LSTP. The span at 35–49 shows a compositional bias: basic and acidic residues; it reads KQNDDPKERIDKDTK. Residues 50 to 63 show a composition bias toward polar residues; sequence NVNSNTGMQTTENY. The span at 67–82 shows a compositional bias: basic and acidic residues; that stretch reads KGNERNVKFPPEHPVE. Residues 129–139 are compositionally biased toward acidic residues; it reads GDYYTDGEESS. At Thr-133 the chain carries Phosphothreonine. Ser-138 and Ser-139 each carry phosphoserine. The span at 170 to 203 shows a compositional bias: low complexity; it reads SSSSSSSLSSSSSGSGTDCLDGGSDSHLSDSSPS. Ser-215 bears the Phosphoserine mark. Polar residues predominate over residues 227–236; that stretch reads TETQPSSTTP. 2 positions are modified to phosphoserine: Ser-245 and Ser-327. Positions 372-447 form a coiled coil; it reads KNYSFTREEV…ALLKRLEAVK (76 aa). 2 disordered regions span residues 395-417 and 483-530; these read LSRQ…HPPK and QYSP…TAWL. Polar residues predominate over residues 491-501; it reads SRTSSATSGLS.

Belongs to the CFAP97 family.

In Pongo abelii (Sumatran orangutan), this protein is Cilia- and flagella-associated protein 97.